Here is a 148-residue protein sequence, read N- to C-terminus: MKLVLTQEVPGLGSPGDIVDVADGYGRNYLVPRRYAILATRGAERQVAQIKRARDARAVRDLDHAKEIAGQLSGLSVRLVSRAGKEGRLFGSVTAADVVSAVTDAGGPALDRRRVELSTPIKSLGSHTVAVHLHPEVSAKLTVQVTSA.

It belongs to the bacterial ribosomal protein bL9 family.

Its function is as follows. Binds to the 23S rRNA. The polypeptide is Large ribosomal subunit protein bL9 (Parafrankia sp. (strain EAN1pec)).